We begin with the raw amino-acid sequence, 187 residues long: Putative manganese efflux pump MntP (187 aa).

The next 6 membrane-spanning stretches (helical) occupy residues Phe-3–Cys-23, His-35–Tyr-55, Phe-56–Leu-76, Leu-107–Leu-127, Val-129–Ala-149, and Leu-166–Phe-186.

This sequence belongs to the MntP (TC 9.B.29) family.

It localises to the cell inner membrane. Its function is as follows. Probably functions as a manganese efflux pump. The protein is Putative manganese efflux pump MntP of Campylobacter jejuni subsp. doylei (strain ATCC BAA-1458 / RM4099 / 269.97).